Reading from the N-terminus, the 360-residue chain is Cannabinoid receptor 2 (360 aa).

The Extracellular segment spans residues 1–33 (MEECWVTEIANGSKDGLDSNPMKDYMILSGPQK). Asn11 carries N-linked (GlcNAc...) asparagine glycosylation. The chain crosses the membrane as a helical span at residues 34–59 (TAVAVLCTLLGLLSALENVAVLYLIL). The Cytoplasmic segment spans residues 60-71 (SSHQLRRKPSYL). The chain crosses the membrane as a helical span at residues 72–92 (FIGSLAGADFLASVVFACSFV). Residues 93-104 (NFHVFHGVDSKA) are Extracellular-facing. A helical membrane pass occupies residues 105–129 (VFLLKIGSVTMTFTASVGSLLLTAI). At 130 to 149 (DRYLCLRYPPSYKALLTRGR) the chain is on the cytoplasmic side. Residues 150–172 (ALVTLGIMWVLSALVSYLPLMGW) traverse the membrane as a helical segment. Topologically, residues 173-188 (TCCPRPCSELFPLIPN) are extracellular. Residues 189–214 (DYLLSWLLFIAFLFSGIIYTYGHVLW) form a helical membrane-spanning segment. Over 215 to 246 (KAHQHVASLSGHQDRQVPGMARMRLDVRLAKT) the chain is Cytoplasmic. Residues 247-267 (LGLVLAVLLICWFPVLALMAH) traverse the membrane as a helical segment. Over 268–279 (SLATTLSDQVKK) the chain is Extracellular. The chain crosses the membrane as a helical span at residues 280 to 301 (AFAFCSMLCLINSMVNPVIYAL). Over 302–360 (RSGEIRSSAHHCLAHWKKCVRGLGSEAKEEAPRSSVTETEADGKITPWPDSRDLDLSDC) the chain is Cytoplasmic. Residues 327-360 (EAKEEAPRSSVTETEADGKITPWPDSRDLDLSDC) are disordered. A phosphoserine mark is found at Ser335 and Ser336. Thr338 bears the Phosphothreonine mark. Residues 351–360 (DSRDLDLSDC) show a composition bias toward basic and acidic residues. A Phosphoserine modification is found at Ser352.

Belongs to the G-protein coupled receptor 1 family. Constitutively phosphorylated on Ser-352; phosphorylation increases cell internalization and desensitizes the receptor. Preferentially expressed in cells of the immune system with higher expression in B-cells and NK cells (at protein level). Expressed in skin in suprabasal layers and hair follicles (at protein level). Highly expressed in tonsil and to a lower extent in spleen, peripheral blood mononuclear cells, and thymus. PubMed:14657172 could not detect expression in normal brain. Expressed in brain by perivascular microglial cells and dorsal root ganglion sensory neurons (at protein level). Two isoforms are produced by alternative promoter usage and differ only in the 5' UTR: isoform CB2A is observed predominantly in testis with some expression in brain, while isoform CB2B is predominant in spleen and leukocytes.

Its subcellular location is the cell membrane. It is found in the cell projection. The protein localises to the dendrite. It localises to the perikaryon. Heterotrimeric G protein-coupled receptor for endocannabinoid 2-arachidonoylglycerol mediating inhibition of adenylate cyclase. May function in inflammatory response, nociceptive transmission and bone homeostasis. The chain is Cannabinoid receptor 2 (CNR2) from Homo sapiens (Human).